Reading from the N-terminus, the 259-residue chain is DNA repair protein RecO (259 aa).

Belongs to the RecO family.

Functionally, involved in DNA repair and RecF pathway recombination. In Leuconostoc mesenteroides subsp. mesenteroides (strain ATCC 8293 / DSM 20343 / BCRC 11652 / CCM 1803 / JCM 6124 / NCDO 523 / NBRC 100496 / NCIMB 8023 / NCTC 12954 / NRRL B-1118 / 37Y), this protein is DNA repair protein RecO.